A 589-amino-acid polypeptide reads, in one-letter code: tRNA (guanine(26)-N(2))-dimethyltransferase 2 (589 aa).

Residues 9 to 465 (TVIKEGEAEI…APMEVIWDIM (457 aa)) enclose the Trm1 methyltransferase domain. R36 is a binding site for S-adenosyl-L-methionine. The interval 51-122 (KQEHEAKSSK…RFAPREPKPP (72 aa)) is disordered. Basic and acidic residues-rich tracts occupy residues 68–81 (VIEK…KEET) and 106–122 (DPAK…PKPP). Residues R134, D152, and V185 each coordinate S-adenosyl-L-methionine. Zn(2+) is bound by residues C315, C318, C350, and C353. The tract at residues 550-589 (LSQHHEELKEEDEEAEPEDNVQDKVDPKRQKTATDNITST) is disordered. The segment covering 558 to 569 (KEEDEEAEPEDN) has biased composition (acidic residues).

It belongs to the class I-like SAM-binding methyltransferase superfamily. Trm1 family.

It carries out the reaction guanosine(26) in tRNA + 2 S-adenosyl-L-methionine = N(2)-dimethylguanosine(26) in tRNA + 2 S-adenosyl-L-homocysteine + 2 H(+). Its function is as follows. Dimethylates a single guanine residue at position 26 of most tRNAs using S-adenosyl-L-methionine as donor of the methyl groups. The chain is tRNA (guanine(26)-N(2))-dimethyltransferase 2 from Arabidopsis thaliana (Mouse-ear cress).